The primary structure comprises 97 residues: MVCVPCFIIPVLLFLWHRFIQPYVLRFWNPWEKKDKDGNVIKDGSSTEFPFQCKGGVCPFPVKDKAKQEVAASGSGSNGTATAVGSEGEAEETKKSQ.

The interval glutamate 69–glutamine 97 is disordered. Over residues glycine 74–alanine 83 the composition is skewed to polar residues.

This sequence belongs to the UPF0729 family.

This chain is UPF0729 protein AAEL015238, found in Aedes aegypti (Yellowfever mosquito).